The chain runs to 470 residues: Aminodeoxychorismate synthase component 1 (470 aa).

This sequence belongs to the anthranilate synthase component I family. As to quaternary structure, monomer. Heterodimer consisting of two non-identical subunits: a glutamine amidotransferase subunit (PabA) and a aminodeoxychorismate synthase subunit (PabB). Mg(2+) is required as a cofactor.

The enzyme catalyses chorismate + L-glutamine = 4-amino-4-deoxychorismate + L-glutamate. Its pathway is cofactor biosynthesis; tetrahydrofolate biosynthesis; 4-aminobenzoate from chorismate: step 1/2. Functionally, part of a heterodimeric complex that catalyzes the two-step biosynthesis of 4-amino-4-deoxychorismate (ADC), a precursor of p-aminobenzoate (PABA) and tetrahydrofolate. In the first step, a glutamine amidotransferase (PabA) generates ammonia as a substrate that, along with chorismate, is used in the second step, catalyzed by aminodeoxychorismate synthase (PabB) to produce ADC. In Bacillus subtilis (strain 168), this protein is Aminodeoxychorismate synthase component 1 (pabB).